A 214-amino-acid chain; its full sequence is uncharacterized protein (214 aa).

It belongs to the uracil-DNA glycosylase (UDG) superfamily.

This is an uncharacterized protein from Haemophilus influenzae (strain ATCC 51907 / DSM 11121 / KW20 / Rd).